A 216-amino-acid polypeptide reads, in one-letter code: Phosducin-like protein 3 (216 aa).

Positions 13–59 form a coiled coil; sequence AKTIEQQLDQQLDRLDNLDSDDLKVLREQRLREMKDLNNKKQEWLRN. Residues 29–163 enclose the Phosducin domain; the sequence is NLDSDDLKVL…DLGNCDDFAT (135 aa).

It belongs to the phosducin family. In terms of tissue distribution, highly expressed in germline cells of the testis from the spermatogonia stage until the early spermatid stage but is no longer observed in late-stage spermatids in the distal end of the testis.

The enzyme catalyses [thioredoxin]-dithiol + NADP(+) = [thioredoxin]-disulfide + NADPH + H(+). Functionally, has redox activity with thioredoxin. Required for male fertility and maturation of sperm past the canoe stage during spermiogenesis. The polypeptide is Phosducin-like protein 3 (Drosophila melanogaster (Fruit fly)).